Reading from the N-terminus, the 287-residue chain is Small ribosomal subunit protein uS2 (287 aa).

The segment at 233–287 (HKAPQDDIEPMAEWEKQLLQSGDSSGETRPISGTDRPLDGDLSKGPAPQDEELSD) is disordered. The segment covering 250-259 (LLQSGDSSGE) has biased composition (polar residues).

It belongs to the universal ribosomal protein uS2 family.

The sequence is that of Small ribosomal subunit protein uS2 from Tropheryma whipplei (strain TW08/27) (Whipple's bacillus).